The chain runs to 337 residues: Large ribosomal subunit protein uL3 (337 aa).

The interval 1-29 (MARHHQPRKGSVAFSPRKRAARETPRVKS) is disordered.

This sequence belongs to the universal ribosomal protein uL3 family. As to quaternary structure, part of the 50S ribosomal subunit. Forms a cluster with proteins L14 and L24e.

Its function is as follows. One of the primary rRNA binding proteins, it binds directly near the 3'-end of the 23S rRNA, where it nucleates assembly of the 50S subunit. This Methanothermobacter thermautotrophicus (strain ATCC 29096 / DSM 1053 / JCM 10044 / NBRC 100330 / Delta H) (Methanobacterium thermoautotrophicum) protein is Large ribosomal subunit protein uL3.